Consider the following 373-residue polypeptide: Peptide chain release factor 2 (373 aa).

Glutamine 251 bears the N5-methylglutamine mark.

This sequence belongs to the prokaryotic/mitochondrial release factor family. In terms of processing, methylated by PrmC. Methylation increases the termination efficiency of RF2.

It localises to the cytoplasm. Functionally, peptide chain release factor 2 directs the termination of translation in response to the peptide chain termination codons UGA and UAA. The protein is Peptide chain release factor 2 of Salinispora arenicola (strain CNS-205).